A 471-amino-acid polypeptide reads, in one-letter code: ATP synthase subunit beta (471 aa).

156–163 is a binding site for ATP; that stretch reads GGAGVGKT.

The protein belongs to the ATPase alpha/beta chains family. F-type ATPases have 2 components, CF(1) - the catalytic core - and CF(0) - the membrane proton channel. CF(1) has five subunits: alpha(3), beta(3), gamma(1), delta(1), epsilon(1). CF(0) has three main subunits: a(1), b(2) and c(9-12). The alpha and beta chains form an alternating ring which encloses part of the gamma chain. CF(1) is attached to CF(0) by a central stalk formed by the gamma and epsilon chains, while a peripheral stalk is formed by the delta and b chains.

The protein resides in the cell membrane. The enzyme catalyses ATP + H2O + 4 H(+)(in) = ADP + phosphate + 5 H(+)(out). Functionally, produces ATP from ADP in the presence of a proton gradient across the membrane. The catalytic sites are hosted primarily by the beta subunits. This Staphylococcus carnosus (strain TM300) protein is ATP synthase subunit beta.